The following is a 419-amino-acid chain: MNLTALKNMPVSELITLGEKMGLENLARMRKQDIIFAILKQHAKSGEDIFGDGVLEILQDGFGFLRSADSSYLAGPDDIYVSPSQIRRFNLRTGDTISGKIRPPKEGERYFALLKVNAVNYDKPENARSKILFENLTPLHANSRLRMERGNGSTEDLTARVLDLASPIGRGQRGLIVAPPKAGKTILLQNIAQSIAYNHPDCVLMVLLIDERPEEVTEMQRLVKGEVVASTFDEPASRHVQVAEMVIEKAKRLVEHKKDVIILLDSITRLARAYNTVVPASGKVLTGGVDANALHRPKRFFGAARNVEEGGSLTIIATALVDTGSKMDEVIYEEFKGTGNMELPLSRKIAEKRVFPAIDYNRSGTRKEELLTLPDELQKMWILRKIIHPMSEIDAMEFLLNKLSMTKTNDEFFDMMKRS.

Residues D48–K123 form the Rho RNA-BD domain. 3 RNA-binding regions span residues G61–R66, D78–Y80, and E108–Y110. Residues G169 to G174, K181 to I186, and R212 contribute to the ATP site. Residues V284 to G288 are RNA-binding 2.

This sequence belongs to the Rho family. Homohexamer. The homohexamer assembles into an open ring structure.

In terms of biological role, facilitates transcription termination by a mechanism that involves Rho binding to the nascent RNA, activation of Rho's RNA-dependent ATPase activity, and release of the mRNA from the DNA template. The protein is Transcription termination factor Rho of Buchnera aphidicola subsp. Schizaphis graminum (strain Sg).